The following is a 184-amino-acid chain: Photosystem I assembly protein Ycf4 (184 aa).

2 helical membrane-spanning segments follow: residues 24 to 44 (WAFI…SSYI) and 57 to 77 (IIFF…LFIS).

This sequence belongs to the Ycf4 family.

The protein resides in the plastid. Its subcellular location is the chloroplast thylakoid membrane. Its function is as follows. Seems to be required for the assembly of the photosystem I complex. The polypeptide is Photosystem I assembly protein Ycf4 (Buxus microphylla (Littleleaf boxwood)).